Consider the following 2615-residue polypeptide: Polycystin-1-like protein 1 (2615 aa).

Residues 1 to 1524 lie on the Extracellular side of the membrane; the sequence is MDVDEDQHAV…VSSISEFQSH (1524 aa). The segment at 17–93 is disordered; sequence IQANPELCVS…GTNSFSNPPP (77 aa). N-linked (GlcNAc...) asparagine glycosylation is found at Asn224, Asn297, Asn306, Asn390, Asn440, Asn534, and Asn619. PKD domains follow at residues 291–373 and 375–456; these read SVSV…VQKR and MANR…VREP. The REJ domain maps to 457–1349; that stretch reads CQPPPVKNMG…GEEDYLHKRN (893 aa). Residues 749-815 form a disordered region; the sequence is SSKSDLPSNL…GEPMEEYSSL (67 aa). Positions 778–789 are enriched in polar residues; sequence ALSNLGSISAES. In terms of domain architecture, GAIN-B spans 1364–1512; that stretch reads RFTGLSENSQ…SVLRRKLNAT (149 aa). Asn1458 carries N-linked (GlcNAc...) asparagine glycosylation. Residues Cys1468 and Cys1494 are joined by a disulfide bond. The GPS stretch occupies residues 1468–1512; sequence CVFWDKTEWRSEGPYPQPGSSPEKVNCSYHHLAPVSVLRRKLNAT. A glycan (N-linked (GlcNAc...) asparagine) is linked at Asn1510. The helical transmembrane segment at 1525–1545 threads the bilayer; that stretch reads PHNLLPGIFSAFLLVLYGILV. The Cytoplasmic segment spans residues 1546 to 1732; sequence SKSRYVDCHE…PPSRSYLHTQ (187 aa). Residues 1573 to 1690 form the PLAT domain; it reads QLYAVVIDTG…LGGHVLREFF (118 aa). The helical transmembrane segment at 1733–1753 threads the bilayer; it reads RLAVSFCLLCVYSCLTALVTV. The Extracellular portion of the chain corresponds to 1754–1772; the sequence is RDHQQRPLDVGPTAITLEP. A helical membrane pass occupies residues 1773–1793; the sequence is FCMALLCTLLACPVAQLLSLL. Topologically, residues 1794-1905 are cytoplasmic; the sequence is FRCSKEARGD…ELGSQKSRVC (112 aa). The tract at residues 1807–1840 is disordered; that stretch reads STQWPLRGVKTETPQGHDSSGRPDSRQPSPHPTS. A helical transmembrane segment spans residues 1906-1926; that stretch reads LLWSSSVAWAISGSASLACGL. Residues 1927–1950 are Extracellular-facing; it reads GTGFLGYWFVPAQCMWWLYLLLLS. A helical membrane pass occupies residues 1951 to 1971; it reads LVCCAFITQPLMICLAALVFA. Over 1972–2057 the chain is Cytoplasmic; sequence WKRKHDSKFF…ERLRRESIMQ (86 aa). Residues 2058 to 2078 traverse the membrane as a helical segment; it reads AALRDMTTHSIMLLLLLFIAY. At 2079–2288 the chain is on the extracellular side; the sequence is GRFCPGEISL…IFYSDSALKY (210 aa). A helical transmembrane segment spans residues 2289–2309; sequence LLMLSELLFLVLNVIHLCFQL. Residues 2310–2332 are Cytoplasmic-facing; sequence WGMTTKGILSYWRKPRHWLELSM. A helical membrane pass occupies residues 2333–2353; the sequence is VGVAIAYYAASGHLTTLAVNI. Residues 2354-2379 lie on the Extracellular side of the membrane; the sequence is TDQFHKGLYQRLVDIGLMVSWHQRAR. The helical transmembrane segment at 2380–2400 threads the bilayer; that stretch reads CLQGILLFLWMLKYVHLLSSL. Residues 2401–2405 are Cytoplasmic-facing; the sequence is STMTP. A helical transmembrane segment spans residues 2406–2426; it reads FSAVTCFPLFRVLLVGALLLA. Residues 2427–2483 are Extracellular-facing; it reads AHYHSRWFLLFTGTLSHGTSAEAFPGLLLQFPGRSKKDSWHNCLKSDHGVMRCYYGT. A helical transmembrane segment spans residues 2484-2504; it reads LFLLLATLGFRMLRATFLTVF. Over 2505-2615 the chain is Cytoplasmic; the sequence is QNRKSSHRKP…VSGPLAAESE (111 aa). The disordered stretch occupies residues 2589–2615; that stretch reads RAGDSPPVGSSEYQATGVSGPLAAESE.

Belongs to the polycystin family. As to quaternary structure, heterodimer. Interacts with PKD2 to form a calcium channel. Interacts with PKD2L1; to form ciliary calcium channel. May interact with GNA12, GNAS, GNAI1 and GNAI2. In testis, strong expression in Leydig cells, low level in seminal ducts, myoid cells and tunica vaginalis. Other tissues, including adrenal gland and heart myocardium, also show low expression. In embryo, highly expressed in the node.

Its subcellular location is the cell projection. The protein resides in the cilium membrane. In terms of biological role, component of a calcium-permeant ion channel formed by PKD1L2 and PKD1L1 in primary cilia, where it controls cilium calcium concentration, without affecting cytoplasmic calcium concentration, and regulates sonic hedgehog/SHH signaling and GLI2 transcription. The PKD1L1:PKD2L1 channel complex is mechanosensitive only at high pressures and is highly temperature sensitive. Also involved in left/right axis specification downstream of nodal flow by forming a complex with PKD2 in cilia to facilitate flow detection in left/right patterning. May function as a G-protein-coupled receptor. This Mus musculus (Mouse) protein is Polycystin-1-like protein 1.